Reading from the N-terminus, the 688-residue chain is G protein-coupled receptor kinase 3 (688 aa).

Residues 1-190 form an N-terminal region; it reads MADLEAVLAD…ELNIHLSMND (190 aa). One can recognise an RGS domain in the interval 54–175; the sequence is TFDKIFNQKI…MESDKFTRFC (122 aa). The Protein kinase domain occupies 191–453; it reads FSVHRIIGRG…ARELKEHIFF (263 aa). ATP is bound by residues 197–205 and lysine 220; that span reads IGRGGFGEV. The active-site Proton acceptor is aspartate 317. An AGC-kinase C-terminal domain is found at 454-521; that stretch reads KGIDWQHVYL…VISERWQQEV (68 aa). A PH domain is found at 558 to 652; the sequence is DCIMHGYMLK…WLKELTCTFN (95 aa).

This sequence belongs to the protein kinase superfamily. AGC Ser/Thr protein kinase family. GPRK subfamily. In terms of assembly, interacts with GIT1. In terms of processing, ubiquitinated.

It is found in the postsynapse. Its subcellular location is the presynapse. It catalyses the reaction [beta-adrenergic receptor] + ATP = [beta-adrenergic receptor]-phosphate + ADP + H(+). Its function is as follows. Specifically phosphorylates the agonist-occupied form of the beta-adrenergic and closely related receptors. The protein is G protein-coupled receptor kinase 3 of Mus musculus (Mouse).